The following is a 418-amino-acid chain: Actin-like protein C08B11.6 (418 aa).

Belongs to the actin family. ARP6 subfamily.

The protein resides in the cytoplasm. Its subcellular location is the cytoskeleton. This chain is Actin-like protein C08B11.6 (arp-6), found in Caenorhabditis elegans.